A 502-amino-acid polypeptide reads, in one-letter code: Cytochrome P450 monooxygenase AacuE (502 aa).

A helical membrane pass occupies residues 4–26; the sequence is AITGLVATVTTFLAYIVFLSYTP. An N-linked (GlcNAc...) asparagine glycan is attached at Asn393. Cys439 provides a ligand contact to heme.

It belongs to the cytochrome P450 family. Heme is required as a cofactor.

It localises to the membrane. The protein operates within secondary metabolite biosynthesis. Functionally, cytochrome P450 monooxygenase; part of the gene cluster that mediates the biosynthesis of the tetrahydroxanthone dimer secalonic acid D. The pathway begins with the synthesis of atrochrysone thioester by the polyketide synthase AacuL. The atrochrysone carboxyl ACP thioesterase AacuM then breaks the thioester bond and releases the atrochrysone carboxylic acid from AacuL. Atrochrysone carboxylic acid is decarboxylated by the decarboxylase AacuI, and oxidized by the anthrone oxygenase AacuG to yield emodin. Emodin is then reduced to emodin hydroquinone by a yet unidentified oxidoreductase. A-ring reduction by the short chain dehydrogenase AacuN, dehydration by the scytalone dehydratase-like protein AacuK and probable spontaneous re-oxidation, results in overall deoxygenation to chrysophanol. Baeyer-Villiger oxidation by the Baeyer-Villiger monooxygenase (BVMO) AacuH then yields monodictyphenone. Monodictyphenone is transformed into compounds with the tetrahydroxanthone skeleton via methylesterification by the methyltransferase AacuQ, followed by the action of the flavin-dependent monooxygenase AacuC, the isomerase AacuP, and the short chain dehydrogenase/reductase AacuF or AacuD. AacuF and AacuD should accept the same compound as a substrate but perform the ketoreduction with a different stereoselectivity, thus yielding blennolides B and A, respectively. In the final step of the biosynthesis, the cytochrome P450 monooxygenase AacuE accepts blennolide B and/or blennolide A to conduct the dimerization reaction to furnish the tetrahydroxanthone dimers, secalonic acids D, B, and F. The protein is Cytochrome P450 monooxygenase AacuE of Aspergillus aculeatus (strain ATCC 16872 / CBS 172.66 / WB 5094).